Consider the following 245-residue polypeptide: Biosynthetic peptidoglycan transglycosylase (245 aa).

The helical transmembrane segment at 20–42 threads the bilayer; that stretch reads VYAGSVFAGAWLATQLFYLVQIA.

Belongs to the glycosyltransferase 51 family.

The protein resides in the cell inner membrane. The enzyme catalyses [GlcNAc-(1-&gt;4)-Mur2Ac(oyl-L-Ala-gamma-D-Glu-L-Lys-D-Ala-D-Ala)](n)-di-trans,octa-cis-undecaprenyl diphosphate + beta-D-GlcNAc-(1-&gt;4)-Mur2Ac(oyl-L-Ala-gamma-D-Glu-L-Lys-D-Ala-D-Ala)-di-trans,octa-cis-undecaprenyl diphosphate = [GlcNAc-(1-&gt;4)-Mur2Ac(oyl-L-Ala-gamma-D-Glu-L-Lys-D-Ala-D-Ala)](n+1)-di-trans,octa-cis-undecaprenyl diphosphate + di-trans,octa-cis-undecaprenyl diphosphate + H(+). Its pathway is cell wall biogenesis; peptidoglycan biosynthesis. Its function is as follows. Peptidoglycan polymerase that catalyzes glycan chain elongation from lipid-linked precursors. This Burkholderia ambifaria (strain ATCC BAA-244 / DSM 16087 / CCUG 44356 / LMG 19182 / AMMD) (Burkholderia cepacia (strain AMMD)) protein is Biosynthetic peptidoglycan transglycosylase.